Consider the following 511-residue polypeptide: Lysine--tRNA ligase (511 aa).

Mg(2+) contacts are provided by E421 and E428.

This sequence belongs to the class-II aminoacyl-tRNA synthetase family. As to quaternary structure, homodimer. Mg(2+) serves as cofactor.

It localises to the cytoplasm. The enzyme catalyses tRNA(Lys) + L-lysine + ATP = L-lysyl-tRNA(Lys) + AMP + diphosphate. In Janthinobacterium sp. (strain Marseille) (Minibacterium massiliensis), this protein is Lysine--tRNA ligase.